Here is a 204-residue protein sequence, read N- to C-terminus: Recombination protein RecR (204 aa).

The C4-type zinc finger occupies Cys-57–Cys-72. The region spanning Glu-80 to Pro-181 is the Toprim domain.

Belongs to the RecR family.

In terms of biological role, may play a role in DNA repair. It seems to be involved in an RecBC-independent recombinational process of DNA repair. It may act with RecF and RecO. This is Recombination protein RecR from Bdellovibrio bacteriovorus (strain ATCC 15356 / DSM 50701 / NCIMB 9529 / HD100).